We begin with the raw amino-acid sequence, 193 residues long: Ion-translocating oxidoreductase complex subunit A (193 aa).

A run of 6 helical transmembrane segments spans residues 5-25 (ALLFVSILLVNNFVLVKFLGL), 39-59 (IGMGMATTFVMTLGSMFSWLI), 62-82 (FILVPLDILYLRTMAFILVLA), 102-122 (LLGIFLPLITTNCAVLGVVLL), 134-154 (TIYGFGGAAGFSLVMVLFAAI), and 171-191 (SIALITAGLMSLAFMGFTGLV).

It belongs to the NqrDE/RnfAE family. The complex is composed of six subunits: RnfA, RnfB, RnfC, RnfD, RnfE and RnfG.

The protein resides in the cell inner membrane. Part of a membrane-bound complex that couples electron transfer with translocation of ions across the membrane. The protein is Ion-translocating oxidoreductase complex subunit A of Pectobacterium atrosepticum (strain SCRI 1043 / ATCC BAA-672) (Erwinia carotovora subsp. atroseptica).